The chain runs to 154 residues: Myoglobin (154 aa).

In terms of domain architecture, Globin spans Gly2–Lys148. The residue at position 4 (Ser4) is a Phosphoserine. His65 is a binding site for nitrite. His65 is a binding site for O2. Thr68 bears the Phosphothreonine mark. A heme b-binding site is contributed by His94.

Belongs to the globin family. In terms of assembly, monomeric.

Its subcellular location is the cytoplasm. The protein resides in the sarcoplasm. It carries out the reaction Fe(III)-heme b-[protein] + nitric oxide + H2O = Fe(II)-heme b-[protein] + nitrite + 2 H(+). The catalysed reaction is H2O2 + AH2 = A + 2 H2O. In terms of biological role, monomeric heme protein which primary function is to store oxygen and facilitate its diffusion within muscle tissues. Reversibly binds oxygen through a pentacoordinated heme iron and enables its timely and efficient release as needed during periods of heightened demand. Depending on the oxidative conditions of tissues and cells, and in addition to its ability to bind oxygen, it also has a nitrite reductase activity whereby it regulates the production of bioactive nitric oxide. Under stress conditions, like hypoxia and anoxia, it also protects cells against reactive oxygen species thanks to its pseudoperoxidase activity. This chain is Myoglobin (MB), found in Orycteropus afer (Aardvark).